A 1184-amino-acid polypeptide reads, in one-letter code: Non-receptor tyrosine-protein kinase TYK2 (1184 aa).

The 398-residue stretch at 33–430 folds into the FERM domain; that stretch reads LMVLLHWPGP…GYFRLTADSS (398 aa). The interval 294–368 is disordered; the sequence is CYIQNSGQTA…KAGEHLTESP (75 aa). Tyr-295 carries the phosphotyrosine modification. Residues 449–529 form the SH2; atypical domain; it reads GIHGPLMDPF…GRSFASLGDL (81 aa). Ser-525 carries the phosphoserine modification. Residues 589–866 enclose the Protein kinase 1 domain; that stretch reads ITQLSHLGQG…RTILRDLTRL (278 aa). Position 604 is a phosphotyrosine (Tyr-604). A Phosphoserine modification is found at Ser-881. A Protein kinase 2 domain is found at 894 to 1166; that stretch reads LKKIRDLGEG…PTFQNLVPIL (273 aa). Residues 900 to 908 and Lys-927 contribute to the ATP site; that span reads LGEGHFGKV. The active-site Proton acceptor is the Asp-1020. Position 1051 is a phosphotyrosine; by autocatalysis (Tyr-1051). Tyr-1052 is modified (phosphotyrosine).

It belongs to the protein kinase superfamily. Tyr protein kinase family. JAK subfamily. As to quaternary structure, interacts (via FERM domain) with JAKMIP1. Interacts with PIK3R1; this interaction is important for cell migration. Interacts with MPL/TPOR. Phosphorylation by JAK1 at Tyr-1051 and Tyr-1052 induces kinase activation.

It carries out the reaction L-tyrosyl-[protein] + ATP = O-phospho-L-tyrosyl-[protein] + ADP + H(+). With respect to regulation, the protein kinase 1 domain (also termed pseudokinase domain) mediates autoinhibition of the TYK2 kinase domain. Its function is as follows. Tyrosine kinase of the non-receptor type involved in numerous cytokines and interferons signaling, which regulates cell growth, development, cell migration, innate and adaptive immunity. Plays both structural and catalytic roles in numerous interleukins and interferons (IFN-alpha/beta) signaling. Associates with heterodimeric cytokine receptor complexes and activates STAT family members including STAT1, STAT3, STAT4 or STAT6. The heterodimeric cytokine receptor complexes are composed of (1) a TYK2-associated receptor chain (IFNAR1, IL12RB1, IL10RB or IL13RA1), and (2) a second receptor chain associated either with JAK1 or JAK2. In response to cytokine-binding to receptors, phosphorylates and activates receptors (IFNAR1, IL12RB1, IL10RB or IL13RA1), creating docking sites for STAT members. In turn, recruited STATs are phosphorylated by TYK2 (or JAK1/JAK2 on the second receptor chain), form homo- and heterodimers, translocate to the nucleus, and regulate cytokine/growth factor responsive genes. Negatively regulates STAT3 activity by promototing phosphorylation at a specific tyrosine that differs from the site used for signaling. This is Non-receptor tyrosine-protein kinase TYK2 from Mus musculus (Mouse).